Consider the following 261-residue polypeptide: Protein unc-50 homolog (261 aa).

Helical transmembrane passes span 37-57 (IFHYPQMDIEYTFWIMFYLCF), 82-102 (AFAVILVFFMAIASMSYAITF), 113-133 (VMFWAVFVDFITVGLLIATIG), 166-186 (SFFPLFIILYVVQFFLLPILL), 190-210 (LFAAILSNTLYIIGFSYYYYV), and 225-245 (VVFLYPIGILFALYIVSVVMG).

It belongs to the unc-50 family.

Its subcellular location is the membrane. This chain is Protein unc-50 homolog, found in Dictyostelium discoideum (Social amoeba).